The chain runs to 239 residues: Putative 3-methyladenine DNA glycosylase (239 aa).

Belongs to the DNA glycosylase MPG family.

This is Putative 3-methyladenine DNA glycosylase from Pseudomonas aeruginosa (strain UCBPP-PA14).